The following is a 1400-amino-acid chain: DNA-directed RNA polymerase subunit beta' (1400 aa).

The Zn(2+) site is built by cysteine 71, cysteine 73, cysteine 86, and cysteine 89. Mg(2+)-binding residues include aspartate 462, aspartate 464, and aspartate 466. The Zn(2+) site is built by cysteine 820, cysteine 893, cysteine 900, and cysteine 903.

Belongs to the RNA polymerase beta' chain family. As to quaternary structure, the RNAP catalytic core consists of 2 alpha, 1 beta, 1 beta' and 1 omega subunit. When a sigma factor is associated with the core the holoenzyme is formed, which can initiate transcription. The cofactor is Mg(2+). Zn(2+) is required as a cofactor.

The enzyme catalyses RNA(n) + a ribonucleoside 5'-triphosphate = RNA(n+1) + diphosphate. Functionally, DNA-dependent RNA polymerase catalyzes the transcription of DNA into RNA using the four ribonucleoside triphosphates as substrates. In Methylobacterium nodulans (strain LMG 21967 / CNCM I-2342 / ORS 2060), this protein is DNA-directed RNA polymerase subunit beta'.